The primary structure comprises 343 residues: 3-dehydroquinate synthase (343 aa).

NAD(+) is bound by residues S61 to K66, G95 to D99, T119 to T120, K132, K141, and F159 to T162. Zn(2+) is bound by residues E174, H231, and H248.

The protein belongs to the sugar phosphate cyclases superfamily. Dehydroquinate synthase family. NAD(+) is required as a cofactor. The cofactor is Co(2+). Zn(2+) serves as cofactor.

It is found in the cytoplasm. It catalyses the reaction 7-phospho-2-dehydro-3-deoxy-D-arabino-heptonate = 3-dehydroquinate + phosphate. It functions in the pathway metabolic intermediate biosynthesis; chorismate biosynthesis; chorismate from D-erythrose 4-phosphate and phosphoenolpyruvate: step 2/7. Catalyzes the conversion of 3-deoxy-D-arabino-heptulosonate 7-phosphate (DAHP) to dehydroquinate (DHQ). This Helicobacter pylori (strain J99 / ATCC 700824) (Campylobacter pylori J99) protein is 3-dehydroquinate synthase.